Consider the following 240-residue polypeptide: Mediator of RNA polymerase II transcription subunit 19-B (240 aa).

Residues 1–14 are compositionally biased toward polar residues; it reads MTEIFSSLYGQPDS. Disordered stretches follow at residues 1–29 and 168–240; these read MTEI…GSGK and PKKK…SSLR. 2 stretches are compositionally biased toward basic residues: residues 168-180 and 209-221; these read PKKK…KHHR and KKKK…KKNR.

The protein belongs to the Mediator complex subunit 19 family. Component of the Mediator complex.

Its subcellular location is the nucleus. Component of the Mediator complex, a coactivator involved in the regulated transcription of nearly all RNA polymerase II-dependent genes. Mediator functions as a bridge to convey information from gene-specific regulatory proteins to the basal RNA polymerase II transcription machinery. Mediator is recruited to promoters by direct interactions with regulatory proteins and serves as a scaffold for the assembly of a functional preinitiation complex with RNA polymerase II and the general transcription factors. The protein is Mediator of RNA polymerase II transcription subunit 19-B (med19b) of Danio rerio (Zebrafish).